The sequence spans 294 residues: Glycine--tRNA ligase alpha subunit (294 aa).

The protein belongs to the class-II aminoacyl-tRNA synthetase family. In terms of assembly, tetramer of two alpha and two beta subunits.

Its subcellular location is the cytoplasm. The catalysed reaction is tRNA(Gly) + glycine + ATP = glycyl-tRNA(Gly) + AMP + diphosphate. The polypeptide is Glycine--tRNA ligase alpha subunit (Oleidesulfovibrio alaskensis (strain ATCC BAA-1058 / DSM 17464 / G20) (Desulfovibrio alaskensis)).